The primary structure comprises 130 residues: MINNFKGILIIILSFLFLLLFKYSNADDYFPYPFFNDQSNQVILFTEINFQGEKFIYNTSMGYLELPNKFHNNVGSFISGTINVCFIKWDPFEQHQIYSRRVNKDYFSNNRFGSRIDGIYNGLCRDSIWK.

Residues 1-26 (MINNFKGILIIILSFLFLLLFKYSNA) form the signal peptide. An N-linked (GlcNAc...) asparagine glycan is attached at N58.

Belongs to the Dictyostelium gerABC family.

Its subcellular location is the secreted. This is an uncharacterized protein from Dictyostelium discoideum (Social amoeba).